Reading from the N-terminus, the 245-residue chain is tRNA1(Val) (adenine(37)-N6)-methyltransferase (245 aa).

It belongs to the methyltransferase superfamily. tRNA (adenine-N(6)-)-methyltransferase family.

It localises to the cytoplasm. It carries out the reaction adenosine(37) in tRNA1(Val) + S-adenosyl-L-methionine = N(6)-methyladenosine(37) in tRNA1(Val) + S-adenosyl-L-homocysteine + H(+). Functionally, specifically methylates the adenine in position 37 of tRNA(1)(Val) (anticodon cmo5UAC). The polypeptide is tRNA1(Val) (adenine(37)-N6)-methyltransferase (Erwinia tasmaniensis (strain DSM 17950 / CFBP 7177 / CIP 109463 / NCPPB 4357 / Et1/99)).